Consider the following 236-residue polypeptide: Biosynthetic peptidoglycan transglycosylase (236 aa).

Residues 12 to 31 (ALLWFAAGSVLVVLVLRWVP) traverse the membrane as a helical segment.

It belongs to the glycosyltransferase 51 family.

Its subcellular location is the cell inner membrane. The enzyme catalyses [GlcNAc-(1-&gt;4)-Mur2Ac(oyl-L-Ala-gamma-D-Glu-L-Lys-D-Ala-D-Ala)](n)-di-trans,octa-cis-undecaprenyl diphosphate + beta-D-GlcNAc-(1-&gt;4)-Mur2Ac(oyl-L-Ala-gamma-D-Glu-L-Lys-D-Ala-D-Ala)-di-trans,octa-cis-undecaprenyl diphosphate = [GlcNAc-(1-&gt;4)-Mur2Ac(oyl-L-Ala-gamma-D-Glu-L-Lys-D-Ala-D-Ala)](n+1)-di-trans,octa-cis-undecaprenyl diphosphate + di-trans,octa-cis-undecaprenyl diphosphate + H(+). It functions in the pathway cell wall biogenesis; peptidoglycan biosynthesis. Functionally, peptidoglycan polymerase that catalyzes glycan chain elongation from lipid-linked precursors. This Pseudomonas savastanoi pv. phaseolicola (strain 1448A / Race 6) (Pseudomonas syringae pv. phaseolicola (strain 1448A / Race 6)) protein is Biosynthetic peptidoglycan transglycosylase.